The sequence spans 423 residues: MARKKIREYDSKRLVKEHFKRLSGKELPIRSVQINETTDLNELVEKEPWLSSEKLVVKPDMLFGKRGKSGLVALKLDFADVATFVKERLGKEVEMSGCKGPITTFIVEPFVPHNEEYYLNVVSDRLGCSISFSECGGIEIEENWDKVKTIFLPTGASLTPEICAPLVATLPLEIKAEIEEFIKVIFTLFQDLDFTFLEMNPFTLVDGSPYPLDMRGELDDTAAFKNFKKWGDIEFPLPFGRVMSPTESFIHGLDEKTSASLKFTVLNPKGRIWTMVAGGGASVIYADTVGDLGYASELGNYAEYSGAPKEDEVLQYARVVIDCATANPDGKSRALVIGGGIANFTDVAATFNGIIRALKEKEAKLKAARMHIFVRRGGPNYQKGLAKMRALGDDIGVPIEVYGPEATMTGICKEAIQYITAAA.

Positions 343, 345, and 376 each coordinate citrate.

This sequence belongs to the succinate/malate CoA ligase beta subunit family. In terms of assembly, heterooctamer of 4 alpha and 4 beta chains. As to expression, expressed in trichomes, epidermal leaf cells, anther tapetal cells, stigma and in young vascular bundles of expanding leaves, cotyledons, roots, pedicel of flowers and siliques.

It is found in the cytoplasm. It localises to the cytosol. It catalyses the reaction oxaloacetate + acetyl-CoA + ADP + phosphate = citrate + ATP + CoA. ATP citrate-lyase is the primary enzyme responsible for the synthesis of cytosolic acetyl-CoA, used for the elongation of fatty acids and biosynthesis of isoprenoids, flavonoids and malonated derivatives. May supply substrate to the cytosolic acetyl-CoA carboxylase, which generates the malonyl-CoA used for the synthesis of a multitude of compounds, including very long chain fatty acids and flavonoids. Required for normal growth and development and elongation of C18 fatty acids to C20 to C24 fatty acids in seeds. In contrast to all known animal ACL enzymes having a homomeric structure, plant ACLs are composed of alpha and beta chains. This Arabidopsis thaliana (Mouse-ear cress) protein is ATP-citrate synthase alpha chain protein 1 (ACLA-1).